The primary structure comprises 183 residues: UPF0397 protein VFMJ11_1662 (183 aa).

Transmembrane regions (helical) follow at residues 8–28 (VVVI…MFGI), 41–61 (AVLA…VGFI), 75–95 (WLTW…FPII), 110–130 (FLIF…TSAF), and 147–167 (LCII…FILN).

Belongs to the UPF0397 family.

The protein localises to the cell membrane. This Aliivibrio fischeri (strain MJ11) (Vibrio fischeri) protein is UPF0397 protein VFMJ11_1662.